The sequence spans 322 residues: Methionyl-tRNA formyltransferase (322 aa).

113–116 contributes to the (6S)-5,6,7,8-tetrahydrofolate binding site; sequence SLLP.

It belongs to the Fmt family.

It catalyses the reaction L-methionyl-tRNA(fMet) + (6R)-10-formyltetrahydrofolate = N-formyl-L-methionyl-tRNA(fMet) + (6S)-5,6,7,8-tetrahydrofolate + H(+). Its function is as follows. Attaches a formyl group to the free amino group of methionyl-tRNA(fMet). The formyl group appears to play a dual role in the initiator identity of N-formylmethionyl-tRNA by promoting its recognition by IF2 and preventing the misappropriation of this tRNA by the elongation apparatus. The chain is Methionyl-tRNA formyltransferase from Bacteroides thetaiotaomicron (strain ATCC 29148 / DSM 2079 / JCM 5827 / CCUG 10774 / NCTC 10582 / VPI-5482 / E50).